The chain runs to 928 residues: Kinesin heavy chain (928 aa).

Residues 7-330 enclose the Kinesin motor domain; the sequence is SIKVVARFRP…LRFGMRAKSI (324 aa). ATP-binding positions include 88 to 95 and 238 to 245; these read GQTGAGKS and GSEKVGKT. Positions 343 to 866 form a coiled coil; the sequence is AELKQMLAKA…VKDRLEAAKA (524 aa). A compositionally biased stretch (low complexity) spans 395 to 409; it reads SKSASTTARPSTPSR. Disordered regions lie at residues 395 to 434 and 893 to 928; these read SKSA…PLDK and GGGD…FQKS. Polar residues predominate over residues 905–928; the sequence is NPTIATLQQNPPENKRSSWFFQKS.

The protein belongs to the TRAFAC class myosin-kinesin ATPase superfamily. Kinesin family. Kinesin subfamily.

Its subcellular location is the cytoplasm. The protein resides in the cytoskeleton. Kinesin is a microtubule-associated force-producing protein that may play a role in organelle transport. Its motor activity is directed toward the microtubule's plus end. In Neurospora crassa (strain ATCC 24698 / 74-OR23-1A / CBS 708.71 / DSM 1257 / FGSC 987), this protein is Kinesin heavy chain (kin).